Consider the following 282-residue polypeptide: Large ribosomal subunit protein uL2 (282 aa).

Disordered stretches follow at residues 31–54 and 223–282; these read KRLT…TRHI and LAMN…NTQR. Composition is skewed to basic residues over residues 34 to 54 and 270 to 282; these read TKPV…TRHI and VTRR…NTQR.

It belongs to the universal ribosomal protein uL2 family. Part of the 50S ribosomal subunit. Forms a bridge to the 30S subunit in the 70S ribosome.

One of the primary rRNA binding proteins. Required for association of the 30S and 50S subunits to form the 70S ribosome, for tRNA binding and peptide bond formation. It has been suggested to have peptidyltransferase activity; this is somewhat controversial. Makes several contacts with the 16S rRNA in the 70S ribosome. This chain is Large ribosomal subunit protein uL2, found in Anaeromyxobacter dehalogenans (strain 2CP-1 / ATCC BAA-258).